We begin with the raw amino-acid sequence, 67 residues long: DNA-directed RNA polymerase subunit omega (67 aa).

The protein belongs to the RNA polymerase subunit omega family. In terms of assembly, the RNAP catalytic core consists of 2 alpha, 1 beta, 1 beta' and 1 omega subunit. When a sigma factor is associated with the core the holoenzyme is formed, which can initiate transcription.

It catalyses the reaction RNA(n) + a ribonucleoside 5'-triphosphate = RNA(n+1) + diphosphate. Its function is as follows. Promotes RNA polymerase assembly. Latches the N- and C-terminal regions of the beta' subunit thereby facilitating its interaction with the beta and alpha subunits. In Exiguobacterium sibiricum (strain DSM 17290 / CCUG 55495 / CIP 109462 / JCM 13490 / 255-15), this protein is DNA-directed RNA polymerase subunit omega.